The sequence spans 209 residues: COP9 signalosome complex subunit 8 (209 aa).

The 172-residue stretch at Asp8 to Phe179 folds into the PCI domain. Position 175 is a phosphoserine (Ser175).

Belongs to the CSN8 family. Component of the CSN complex, composed of COPS1/GPS1, COPS2, COPS3, COPS4, COPS5, COPS6, COPS7 (COPS7A or COPS7B), COPS8 and COPS9. In the complex, it probably interacts directly with COPS3, COPS4 and COPS7 (COPS7A or COPS7B).

It localises to the cytoplasm. The protein localises to the nucleus. Its function is as follows. Component of the COP9 signalosome complex (CSN), a complex involved in various cellular and developmental processes. The CSN complex is an essential regulator of the ubiquitin (Ubl) conjugation pathway by mediating the deneddylation of the cullin subunits of SCF-type E3 ligase complexes, leading to decrease the Ubl ligase activity of SCF-type complexes such as SCF, CSA or DDB2. The complex is also involved in phosphorylation of p53/TP53, c-jun/JUN, IkappaBalpha/NFKBIA, ITPK1 and IRF8/ICSBP, possibly via its association with CK2 and PKD kinases. CSN-dependent phosphorylation of TP53 and JUN promotes and protects degradation by the Ubl system, respectively. This is COP9 signalosome complex subunit 8 (Cops8) from Rattus norvegicus (Rat).